Consider the following 476-residue polypeptide: ATP synthase subunit beta (476 aa).

Position 152–159 (152–159 (GGAGVGKT)) interacts with ATP.

This sequence belongs to the ATPase alpha/beta chains family. F-type ATPases have 2 components, CF(1) - the catalytic core - and CF(0) - the membrane proton channel. CF(1) has five subunits: alpha(3), beta(3), gamma(1), delta(1), epsilon(1). CF(0) has three main subunits: a(1), b(2) and c(9-12). The alpha and beta chains form an alternating ring which encloses part of the gamma chain. CF(1) is attached to CF(0) by a central stalk formed by the gamma and epsilon chains, while a peripheral stalk is formed by the delta and b chains.

The protein localises to the cell inner membrane. The catalysed reaction is ATP + H2O + 4 H(+)(in) = ADP + phosphate + 5 H(+)(out). Its function is as follows. Produces ATP from ADP in the presence of a proton gradient across the membrane. The catalytic sites are hosted primarily by the beta subunits. The chain is ATP synthase subunit beta from Granulibacter bethesdensis (strain ATCC BAA-1260 / CGDNIH1).